Here is a 781-residue protein sequence, read N- to C-terminus: MQFSEAWLRKLVNPALDTTELAHALTMAGLEVEALTAAAPPFNDVVVAEILSAQKHPDADRLRVCQVDIGEAAPATIVCGAPNAAAGLKVPCARPGAKLPGIEIKVAKVRGVESFGMLCSTKELGLEGAADGLMVLPDDAPVGEDLRGWLNLDDTLVTLKLTPNRADCLSLVGIAREVGAITGAEVRIPQASPVAPRIADTVEVTVAASDACSRYLGRVVRGIDAQATTPRWMAERLERGGIRPLLAPIDVTNYVLLELGQPMHAFALSRLSGGIEVRLARAGETLALLSGQTVELSPDMLVIADASGPVALAGIMGGQATSVERATVDVFLEAAFFAPAAIAGRARRLGLSTDSAHRFERGVDFGAIHAAMERATQLLLDICGGQPGPISEVTGSLPRREPIELRLSRLRRVAGVELGADQVIRDLAALGCVVEQADERLVVTPPSFRFDLAIEEDLIEEAVRLFGYDRIPARPPAAPSRMLAQDETRIADDALRQKMVDLDYQEVITYSFVDPAGEQALDPDVRLLTLANPIASQLSVMRTTLWGGLIETLRHNLNRQQERVRIFELGRVYASLAEQPRKLGGLAYGEALPEQWGVPGRRVDFFDVKGDLERLFGQPLDAGRGEHPALHPGQSAALWVDGHRGGWIGALHPRLVQAFDLAAAPVLFELDSEILARRALPRHAGLSRFPQVRRDLAFVLDAGLAAGDLLAALREAAPASIRAIEVFDDYRGKGVDQNQKSLAIRVVMQDTERTLTDRDVDEAVQKLVDAAARRCSATLRA.

The tRNA-binding domain occupies 39–147 (APPFNDVVVA…DDAPVGEDLR (109 aa)). One can recognise a B5 domain in the interval 398-473 (PRREPIELRL…RLFGYDRIPA (76 aa)). The Mg(2+) site is built by aspartate 451, aspartate 457, glutamate 460, and glutamate 461. An FDX-ACB domain is found at 687-780 (SRFPQVRRDL…AARRCSATLR (94 aa)).

The protein belongs to the phenylalanyl-tRNA synthetase beta subunit family. Type 1 subfamily. In terms of assembly, tetramer of two alpha and two beta subunits. Mg(2+) is required as a cofactor.

It is found in the cytoplasm. It carries out the reaction tRNA(Phe) + L-phenylalanine + ATP = L-phenylalanyl-tRNA(Phe) + AMP + diphosphate + H(+). This chain is Phenylalanine--tRNA ligase beta subunit, found in Thiobacillus denitrificans (strain ATCC 25259 / T1).